A 494-amino-acid chain; its full sequence is UDP-glucose 6-dehydrogenase (494 aa).

Residues 11-16 (GAGYVG), Asp36, Arg41, 89-93 (VNTPT), and 130-132 (STV) each bind NAD(+). The disordered stretch occupies residues 88–110 (SVNTPTKTYGMGKGRAADLKYIE). The allosteric switch region stretch occupies residues 129-135 (KSTVPVR). Glu161 serves as the catalytic Proton donor/acceptor. Residues 161–165 (EFLAE), 220–224 (KLAAN), Arg260, and 267–273 (KASVGFG) contribute to the substrate site. Glu165 contacts NAD(+). Residue Lys220 is the Proton donor/acceptor of the active site. Cys276 acts as the Nucleophile in catalysis. NAD(+) is bound at residue 276–279 (CFQK). An important for formation of active hexamer structure region spans residues 321–325 (SLFNT). 338–339 (FK) is a substrate binding site. Arg346 contacts NAD(+). Arg442 lines the substrate pocket. The tract at residues 466–494 (VSAKRIPFASSCEIPKFSLQDPPVKKPRV) is disordered.

This sequence belongs to the UDP-glucose/GDP-mannose dehydrogenase family. Homohexamer.

It catalyses the reaction UDP-alpha-D-glucose + 2 NAD(+) + H2O = UDP-alpha-D-glucuronate + 2 NADH + 3 H(+). It participates in nucleotide-sugar biosynthesis; UDP-alpha-D-glucuronate biosynthesis; UDP-alpha-D-glucuronate from UDP-alpha-D-glucose: step 1/1. With respect to regulation, UDP-alpha-D-xylose (UDX) acts as a feedback inhibitor. It binds at the same site as the substrate, but functions as allosteric inhibitor by triggering a conformation change that disrupts the active hexameric ring structure and gives rise to an inactive, horseshoe-shaped hexamer. Its function is as follows. Catalyzes the formation of UDP-alpha-D-glucuronate, a constituent of complex glycosaminoglycans. Required for the biosynthesis of chondroitin sulfate and heparan sulfate. Required for embryonic development via its role in the biosynthesis of glycosaminoglycans. This Gallus gallus (Chicken) protein is UDP-glucose 6-dehydrogenase (UGDH).